Reading from the N-terminus, the 299-residue chain is Oxygen-dependent coproporphyrinogen-III oxidase (299 aa).

Ser92 contacts substrate. A divalent metal cation is bound by residues His96 and His106. His106 (proton donor) is an active-site residue. 108–110 (NVR) is a substrate binding site. Positions 145 and 175 each coordinate a divalent metal cation. Residues 240–275 (YVEFNLVWDRGTLFGLQTGGRTESILMSMPPLVRWE) form an important for dimerization region. 258–260 (GGR) is a substrate binding site.

It belongs to the aerobic coproporphyrinogen-III oxidase family. In terms of assembly, homodimer. The cofactor is a divalent metal cation.

It is found in the cytoplasm. It catalyses the reaction coproporphyrinogen III + O2 + 2 H(+) = protoporphyrinogen IX + 2 CO2 + 2 H2O. Its pathway is porphyrin-containing compound metabolism; protoporphyrin-IX biosynthesis; protoporphyrinogen-IX from coproporphyrinogen-III (O2 route): step 1/1. Functionally, involved in the heme biosynthesis. Catalyzes the aerobic oxidative decarboxylation of propionate groups of rings A and B of coproporphyrinogen-III to yield the vinyl groups in protoporphyrinogen-IX. This is Oxygen-dependent coproporphyrinogen-III oxidase from Salmonella dublin (strain CT_02021853).